A 777-amino-acid chain; its full sequence is Glucocorticoid receptor (777 aa).

A compositionally biased stretch (basic and acidic residues) spans 1-14 (MDSKESLTPGKEEN). A disordered region spans residues 1–21 (MDSKESLTPGKEENPSSVLTQ). The segment at 1–420 (MDSKESLTPG…TATTGPPPKL (420 aa)) is modulating. T8 carries the post-translational modification Phosphothreonine. R23 bears the Omega-N-methylarginine mark. S45, S113, S134, and S141 each carry phosphoserine. Residues 130-182 (NRSTSVPENPKSSASSSVSAAPKEKEFPKTHSDVSSEQQNLKGQTGTNGGNVK) form a disordered region. The segment covering 134–150 (SVPENPKSSASSSVSAA) has biased composition (low complexity). Residues 151–163 (PKEKEFPKTHSDV) are compositionally biased toward basic and acidic residues. Positions 164-174 (SSEQQNLKGQT) are enriched in polar residues. A phosphoserine mark is found at S203, S211, and S226. K258 is covalently cross-linked (Glycyl lysine isopeptide (Lys-Gly) (interchain with G-Cter in SUMO2)). S267 is subject to Phosphoserine. Glycyl lysine isopeptide (Lys-Gly) (interchain with G-Cter in SUMO); alternate cross-links involve residues K277 and K293. Residues K277 and K293 each participate in a glycyl lysine isopeptide (Lys-Gly) (interchain with G-Cter in SUMO2); alternate cross-link. Low complexity predominate over residues 394 to 414 (SSPSMRPDVSSPPSSSSTATT). The disordered stretch occupies residues 394-415 (SSPSMRPDVSSPPSSSSTATTG). S404 is modified (phosphoserine). A Glycyl lysine isopeptide (Lys-Gly) (interchain with G-Cter in ubiquitin) cross-link involves residue K419. 2 NR C4-type zinc fingers span residues 421 to 441 (CLVC…CGSC) and 457 to 481 (CAGR…YRKC). Residues 421–486 (CLVCSDEASG…RYRKCLQAGM (66 aa)) constitute a DNA-binding region (nuclear receptor). N6-acetyllysine is present on residues K480, K492, K494, and K495. The tract at residues 485–777 (GMNLEARKTK…NIKKLLFHQK (293 aa)) is interaction with CLOCK. Residues 487–523 (NLEARKTKKKIKGIQQATTGVSQETSENPANKTIVPA) form a hinge region. One can recognise an NR LBD domain in the interval 524–758 (TLPQLTPTLV…FPEMLAEIIT (235 aa)). The tract at residues 532–697 (LVSLLEVIEP…EIRMTYIKEL (166 aa)) is interaction with CRY1. K703 participates in a covalent cross-link: Glycyl lysine isopeptide (Lys-Gly) (interchain with G-Cter in SUMO).

Belongs to the nuclear hormone receptor family. NR3 subfamily. In terms of assembly, heteromultimeric cytoplasmic complex with HSP90AA1, HSPA1A/HSPA1B, and FKBP5 or another immunophilin such as PPID, STIP1, or the immunophilin homolog PPP5C. Upon ligand binding FKBP5 dissociates from the complex and FKBP4 takes its place, thereby linking the complex to dynein and mediating transport to the nucleus, where the complex dissociates. Probably forms a complex composed of chaperones HSP90 and HSP70, co-chaperones CDC37, PPP5C, TSC1 and client protein TSC2, CDK4, AKT, RAF1 and NR3C1; this complex does not contain co-chaperones STIP1/HOP and PTGES3/p23. Directly interacts with UNC45A. Binds to DNA as a homodimer, and as heterodimer with NR3C2 or the retinoid X receptor. Binds STAT5A and STAT5B homodimers and heterodimers. Interacts with NRIP1, POU2F1, POU2F2 and TRIM28. Interacts with several coactivator complexes, including the SMARCA4 complex, CREBBP/EP300, TADA2L (Ada complex) and p160 coactivators such as NCOA2 and NCOA6. Interaction with BAG1 inhibits transactivation. Interacts with HEXIM1 and TGFB1I1. Interacts with NCOA1. Interacts with NCOA3, SMARCA4, SMARCC1, SMARCD1, and SMARCE1. Interacts with CLOCK, CRY1 and CRY2 in a ligand-dependent fashion. Interacts with CIART. Interacts with RWDD3. Interacts with UBE2I/UBC9 and this interaction is enhanced in the presence of RWDD3. Interacts with GRIP1. Interacts with NR4A3 (via nuclear receptor DNA-binding domain), represses transcription activity of NR4A3 on the POMC promoter Nur response element (NurRE). Directly interacts with PNRC2 to attract and form a complex with UPF1 and DCP1A; the interaction leads to rapid mRNA degradation. Interacts with GSK3B. Interacts with FNIP1 and FNIP2. Interacts (via C-terminus) with HNRNPU (via C-terminus). Interacts with MCM3AP. Interacts (via domain NR LBD) with HSP90AA1 and HSP90AB1. In the absence of hormonal ligand, interacts with TACC1. Interacts (via NR LBD domain) with ZNF764 (via KRAB domain); the interaction regulates transcription factor activity of NR3C1 by directing its actions toward certain biologic pathways. Acetylation by CLOCK reduces its binding to glucocorticoid response elements and its transcriptional activity. In terms of processing, increased proteasome-mediated degradation in response to glucocorticoids. Post-translationally, phosphorylated in the absence of hormone; becomes hyperphosphorylated in the presence of glucocorticoid. The Ser-203, Ser-226 and Ser-404-phosphorylated forms are mainly cytoplasmic, and the Ser-211-phosphorylated form is nuclear. Phosphorylation at Ser-211 increases transcriptional activity. Phosphorylation at Ser-203, Ser-226 and Ser-404 decreases signaling capacity. Phosphorylation at Ser-404 may protect from glucocorticoid-induced apoptosis. Phosphorylation at Ser-203 and Ser-211 is not required in regulation of chromosome segregation. May be dephosphorylated by PPP5C, attenuates NR3C1 action. Ubiquitinated by UBR5, leading to its degradation: UBR5 specifically recognizes and binds ligand-bound NR3C1 when it is not associated with coactivators (NCOAs). In presence of NCOAs, the UBR5-degron is not accessible, preventing its ubiquitination and degradation. In terms of processing, sumoylation at Lys-277 and Lys-293 negatively regulates its transcriptional activity. Sumoylation at Lys-703 positively regulates its transcriptional activity in the presence of RWDD3. Sumoylation at Lys-277 and Lys-293 is dispensable whereas sumoylation at Lys-703 is critical for the stimulatory effect of RWDD3 on its transcriptional activity. Heat shock increases sumoylation in a RWDD3-dependent manner. Within the infant and adult hippocampal formation, highest expression observed in the DG granule cell layer with moderate levels in the DG hilus, the CA2-CA4 pyramidal cell layer and the proximal part of the CA1 pyramidal cell layer. Moderate to high expression levels found in the presubiculum and in its' superficial layers. Weak but specific expression detected throughout the entire corticle mantle. In the amygdala, moderate levels were detected in the lateral, central and medial nuclei. Moderate expression levels were present in the PVNh alongside the third ventricle.

Its subcellular location is the cytoplasm. It localises to the nucleus. The protein resides in the mitochondrion. It is found in the cytoskeleton. The protein localises to the spindle. Its subcellular location is the microtubule organizing center. It localises to the centrosome. The protein resides in the chromosome. It is found in the nucleoplasm. In terms of biological role, receptor for glucocorticoids (GC). Has a dual mode of action: as a transcription factor that binds to glucocorticoid response elements (GRE), both for nuclear and mitochondrial DNA, and as a modulator of other transcription factors. Affects inflammatory responses, cellular proliferation and differentiation in target tissues. Involved in chromatin remodeling. Plays a role in rapid mRNA degradation by binding to the 5' UTR of target mRNAs and interacting with PNRC2 in a ligand-dependent manner which recruits the RNA helicase UPF1 and the mRNA-decapping enzyme DCP1A, leading to RNA decay. Could act as a coactivator for STAT5-dependent transcription upon growth hormone (GH) stimulation and could reveal an essential role of hepatic GR in the control of body growth. Mediates glucocorticoid-induced apoptosis. Promotes accurate chromosome segregation during mitosis. May act as a tumor suppressor. May play a negative role in adipogenesis through the regulation of lipolytic and antilipogenic gene expression. The protein is Glucocorticoid receptor (NR3C1) of Callithrix jacchus (White-tufted-ear marmoset).